A 246-amino-acid chain; its full sequence is Bis(5'-nucleosyl)-tetraphosphatase PrpE [asymmetrical] (246 aa).

The protein belongs to the PrpE family. Ni(2+) serves as cofactor.

The enzyme catalyses P(1),P(4)-bis(5'-guanosyl) tetraphosphate + H2O = GMP + GTP + 2 H(+). Functionally, asymmetrically hydrolyzes Ap4p to yield AMP and ATP. This is Bis(5'-nucleosyl)-tetraphosphatase PrpE [asymmetrical] from Bacillus cereus (strain ATCC 14579 / DSM 31 / CCUG 7414 / JCM 2152 / NBRC 15305 / NCIMB 9373 / NCTC 2599 / NRRL B-3711).